Reading from the N-terminus, the 492-residue chain is Trk system potassium uptake protein TrkI (492 aa).

Helical transmembrane passes span V20–I40, A47–V67, F81–L101, I143–L163, I196–L216, Q246–I266, V282–S302, A334–G354, V403–L423, and W465–L485.

The protein belongs to the TrkH potassium transport family.

It is found in the cell inner membrane. Medium-affinity potassium transport system. Probably interacts with Trk system potassium uptake protein TrkA. Main K(+) transporter in osmotically adapted cells. The polypeptide is Trk system potassium uptake protein TrkI (trkI) (Halomonas elongata (strain ATCC 33173 / DSM 2581 / NBRC 15536 / NCIMB 2198 / 1H9)).